We begin with the raw amino-acid sequence, 211 residues long: MTHRRTKLFMMAAVVSYVMTSCGAVPINDLLDRASQRSDQLHSLSTTLSQELDSHFPPIGRVIMPRPSMCHTSALQTPNDKTQALQVSESELLSLARSLLQAWADPLSALSSSAFSLPHPAQSSIFNKVREMQEHSKNLGDGLDILSGKMGEAAQALSSLPFRGNDVGQDRISKLINFHFLLSCFRRDSHKIDSFLKVLRCRAANTQPEMC.

Residues 1-24 (MTHRRTKLFMMAAVVSYVMTSCGA) form the signal peptide. 2 disulfide bridges follow: Cys70/Cys184 and Cys201/Cys211.

It belongs to the somatotropin/prolactin family.

The protein localises to the secreted. The polypeptide is Prolactin (prl) (Paralichthys olivaceus (Bastard halibut)).